Consider the following 875-residue polypeptide: Valine--tRNA ligase (875 aa).

Residues 41 to 51 (PNVTGSLHMGH) carry the 'HIGH' region motif. The short motif at 525 to 529 (KMSKS) is the 'KMSKS' region element. Residue Lys-528 participates in ATP binding. Residues 810–875 (VDLELIKKNL…ERISITIKGL (66 aa)) are a coiled coil.

It belongs to the class-I aminoacyl-tRNA synthetase family. ValS type 1 subfamily. Monomer.

The protein localises to the cytoplasm. The enzyme catalyses tRNA(Val) + L-valine + ATP = L-valyl-tRNA(Val) + AMP + diphosphate. Functionally, catalyzes the attachment of valine to tRNA(Val). As ValRS can inadvertently accommodate and process structurally similar amino acids such as threonine, to avoid such errors, it has a 'posttransfer' editing activity that hydrolyzes mischarged Thr-tRNA(Val) in a tRNA-dependent manner. The protein is Valine--tRNA ligase of Pelagibacter ubique (strain HTCC1062).